The sequence spans 337 residues: Centromere protein N (337 aa).

Phosphoserine is present on residues serine 226 and serine 233.

The protein belongs to the CENP-N/CHL4 family. As to quaternary structure, component of the CENPA-NAC complex, at least composed of CENPA, CENPC, CENPH, CENPM, CENPN, CENPT and CENPU. The CENPA-NAC complex interacts with the CENPA-CAD complex, composed of CENPI, CENPK, CENPL, CENPO, CENPP, CENPQ, CENPR and CENPS. Interacts directly with CENPA. Identified in a centromere complex containing histones H2A, H2B and H4, and at least CENPA, CENPB, CENPC, CENPT, CENPN, HJURP, SUPT16H, SSRP1 and RSF1.

It localises to the nucleus. It is found in the chromosome. Its subcellular location is the centromere. The protein localises to the kinetochore. Its function is as follows. Component of the CENPA-NAC (nucleosome-associated) complex, a complex that plays a central role in assembly of kinetochore proteins, mitotic progression and chromosome segregation. The CENPA-NAC complex recruits the CENPA-CAD (nucleosome distal) complex and may be involved in incorporation of newly synthesized CENPA into centromeres. CENPN is the first protein to bind specifically to CENPA nucleosomes and the direct binding of CENPA nucleosomes by CENPN is required for centromere assembly. Required for chromosome congression and efficiently align the chromosomes on a metaphase plate. The protein is Centromere protein N (Cenpn) of Mus musculus (Mouse).